Consider the following 521-residue polypeptide: Bifunctional purine biosynthesis protein PurH (521 aa).

The region spanning 1-145 is the MGS-like domain; that stretch reads MIKQALISVS…KNHRDVTVIV (145 aa).

Belongs to the PurH family.

It carries out the reaction (6R)-10-formyltetrahydrofolate + 5-amino-1-(5-phospho-beta-D-ribosyl)imidazole-4-carboxamide = 5-formamido-1-(5-phospho-D-ribosyl)imidazole-4-carboxamide + (6S)-5,6,7,8-tetrahydrofolate. The enzyme catalyses IMP + H2O = 5-formamido-1-(5-phospho-D-ribosyl)imidazole-4-carboxamide. It participates in purine metabolism; IMP biosynthesis via de novo pathway; 5-formamido-1-(5-phospho-D-ribosyl)imidazole-4-carboxamide from 5-amino-1-(5-phospho-D-ribosyl)imidazole-4-carboxamide (10-formyl THF route): step 1/1. The protein operates within purine metabolism; IMP biosynthesis via de novo pathway; IMP from 5-formamido-1-(5-phospho-D-ribosyl)imidazole-4-carboxamide: step 1/1. This is Bifunctional purine biosynthesis protein PurH from Burkholderia multivorans (strain ATCC 17616 / 249).